The chain runs to 98 residues: NADH-ubiquinone oxidoreductase chain 4L (98 aa).

3 helical membrane passes run Met-1–Ile-21, Ser-28–Ile-48, and Ala-59–Val-79.

This sequence belongs to the complex I subunit 4L family. Core subunit of respiratory chain NADH dehydrogenase (Complex I) which is composed of 45 different subunits.

Its subcellular location is the mitochondrion inner membrane. The enzyme catalyses a ubiquinone + NADH + 5 H(+)(in) = a ubiquinol + NAD(+) + 4 H(+)(out). Core subunit of the mitochondrial membrane respiratory chain NADH dehydrogenase (Complex I) which catalyzes electron transfer from NADH through the respiratory chain, using ubiquinone as an electron acceptor. Part of the enzyme membrane arm which is embedded in the lipid bilayer and involved in proton translocation. The protein is NADH-ubiquinone oxidoreductase chain 4L (MT-ND4L) of Tarsipes rostratus (Honey possum).